The chain runs to 283 residues: uncharacterized protein (283 aa).

The FAD-binding FR-type domain occupies 4 to 131 (RPLHAFEVVA…MGPGGAYAPD (128 aa)).

This is an uncharacterized protein from Mycobacterium bovis (strain ATCC BAA-935 / AF2122/97).